Reading from the N-terminus, the 454-residue chain is Protein pid-2 (454 aa).

The interval 31–61 is disordered; it reads VQNNQKEHPPVQEIKTVSSKSKEHRVSSSRK. The span at 50 to 61 shows a compositional bias: basic and acidic residues; that stretch reads KSKEHRVSSSRK.

As to quaternary structure, may interact with pid-4, pid-5, app-1 and prmt-5. Expressed throughout the mitotic and meiotic regions of the germline and in oocytes.

The protein localises to the cytoplasm. It is found in the perinuclear region. Its subcellular location is the cytoplasmic granule. Involved in gene silencing mediated by a class of 21 nucleotide PIWI-interacting RNAs (piRNAs) that possess a uracil residue at the 5'-end (also called 21U-RNAs) and that guide the Piwi protein prg-1 to its DNA targets for silencing. Not required for the biogenesis of 21U-RNAs. May also be involved in gene silencing mediated by 22G-siRNAs (a class of 22 nucleotide endogenous small interfering RNAs (siRNAs) that possess a triphosphorylated guanine residue at the 5'-end) and 26G-siRNAs (a class of 26 nucleotide siRNAs that possess a guanine residue at the 5'-end). Required for the biogenesis of secondary and tertiary 22G-siRNAs from many loci. Specifically, promotes the production of 22G-siRNAs from the 5' end of target mRNAs. May play a role in the production of 26G-siRNAs. Plays a role in small RNA-directed transgenerational epigenetic inheritance (also called RNAe) over several generations and germline immortality. Together with the argonaut protein hrde-1, promotes the silencing of the DNA transposable element Tc1. Required for the formation of liquid-like condensates in the cytoplasm called Z granules, playing a role in maintaining their assembly, viscosity and morphology in adult germ cells, and localization in early embryos. In Caenorhabditis elegans, this protein is Protein pid-2.